The chain runs to 344 residues: DNA-directed RNA polymerase subunit alpha (344 aa).

The tract at residues 1–246 (MPMERFLKDF…EFLFPLVDFE (246 aa)) is alpha N-terminal domain (alpha-NTD). Residues 259–344 (ESSNLLDMSI…VLSKNVKISE (86 aa)) are alpha C-terminal domain (alpha-CTD).

Belongs to the RNA polymerase alpha chain family. As to quaternary structure, homodimer. The RNAP catalytic core consists of 2 alpha, 1 beta, 1 beta' and 1 omega subunit. When a sigma factor is associated with the core the holoenzyme is formed, which can initiate transcription.

It carries out the reaction RNA(n) + a ribonucleoside 5'-triphosphate = RNA(n+1) + diphosphate. Functionally, DNA-dependent RNA polymerase catalyzes the transcription of DNA into RNA using the four ribonucleoside triphosphates as substrates. This Borreliella afzelii (strain PKo) (Borrelia afzelii) protein is DNA-directed RNA polymerase subunit alpha.